The primary structure comprises 364 residues: Chorismate synthase (364 aa).

Residues Arg-48 and Arg-54 each contribute to the NADP(+) site. Residues 125–127, 238–239, Gly-278, 293–297, and Arg-319 each bind FMN; these read RSS, NA, and KPTSS.

Belongs to the chorismate synthase family. In terms of assembly, homotetramer. Requires FMNH2 as cofactor.

The catalysed reaction is 5-O-(1-carboxyvinyl)-3-phosphoshikimate = chorismate + phosphate. It participates in metabolic intermediate biosynthesis; chorismate biosynthesis; chorismate from D-erythrose 4-phosphate and phosphoenolpyruvate: step 7/7. Functionally, catalyzes the anti-1,4-elimination of the C-3 phosphate and the C-6 proR hydrogen from 5-enolpyruvylshikimate-3-phosphate (EPSP) to yield chorismate, which is the branch point compound that serves as the starting substrate for the three terminal pathways of aromatic amino acid biosynthesis. This reaction introduces a second double bond into the aromatic ring system. The polypeptide is Chorismate synthase (Shewanella frigidimarina (strain NCIMB 400)).